We begin with the raw amino-acid sequence, 287 residues long: uncharacterized protein (287 aa).

The protein belongs to the A.longa ORF167/ORF288 family.

The protein resides in the plastid. This is an uncharacterized protein from Euglena longa (Euglenophycean alga).